Here is a 724-residue protein sequence, read N- to C-terminus: Methionine--tRNA ligase (724 aa).

The short motif at 12–22 (PYVNNIPHLGN) is the 'HIGH' region element. Residues C143, C146, C155, and C158 each coordinate Zn(2+). The 'KMSKS' region motif lies at 330–334 (KFSKS). K333 provides a ligand contact to ATP. Positions 560 to 665 (FREKVLLKVV…KNPIPGERII (106 aa)) constitute a tRNA-binding domain.

The protein belongs to the class-I aminoacyl-tRNA synthetase family. MetG type 1 subfamily. As to quaternary structure, homodimer. Zn(2+) serves as cofactor.

The protein localises to the cytoplasm. It carries out the reaction tRNA(Met) + L-methionine + ATP = L-methionyl-tRNA(Met) + AMP + diphosphate. Is required not only for elongation of protein synthesis but also for the initiation of all mRNA translation through initiator tRNA(fMet) aminoacylation. This chain is Methionine--tRNA ligase, found in Borrelia garinii subsp. bavariensis (strain ATCC BAA-2496 / DSM 23469 / PBi) (Borreliella bavariensis).